The following is a 102-amino-acid chain: Vacuolar ATPase assembly integral membrane protein VMA21 (102 aa).

The Cytoplasmic portion of the chain corresponds to 1 to 30; it reads MERYDKATLNAAFAPEFRQNEGSLTSTLRT. Residues 31-51 traverse the membrane as a helical segment; sequence LLFFTALMITLPVGLYFSSKA. Over 52-66 the chain is Lumenal; the sequence is YIFEGTLGMSNRDSY. A helical membrane pass occupies residues 67–87; sequence FYAAIVAVVTVHVVLAMFVYV. At 88 to 102 the chain is on the cytoplasmic side; it reads AWSEGTRQWREGKQD.

This sequence belongs to the VMA21 family. In terms of assembly, associates with the V0 complex of the vacuolar ATPase (V-ATPase). Interacts with ATP6AP2.

It is found in the endoplasmic reticulum membrane. Its subcellular location is the endoplasmic reticulum-Golgi intermediate compartment membrane. The protein localises to the cytoplasmic vesicle. It localises to the COPII-coated vesicle membrane. Its function is as follows. Required for the assembly of the V0 complex of the vacuolar ATPase (V-ATPase) in the endoplasmic reticulum. This Gallus gallus (Chicken) protein is Vacuolar ATPase assembly integral membrane protein VMA21.